Reading from the N-terminus, the 417-residue chain is Tyrosine--tRNA ligase (417 aa).

Tyr39 contacts L-tyrosine. Residues Pro44–Ser53 carry the 'HIGH' region motif. The L-tyrosine site is built by Tyr176 and Gln180. The 'KMSKS' region motif lies at Lys236 to Ser240. Lys239 lines the ATP pocket. Residues Ala350–Leu417 enclose the S4 RNA-binding domain.

This sequence belongs to the class-I aminoacyl-tRNA synthetase family. TyrS type 1 subfamily. In terms of assembly, homodimer.

The protein resides in the cytoplasm. The catalysed reaction is tRNA(Tyr) + L-tyrosine + ATP = L-tyrosyl-tRNA(Tyr) + AMP + diphosphate + H(+). Its function is as follows. Catalyzes the attachment of tyrosine to tRNA(Tyr) in a two-step reaction: tyrosine is first activated by ATP to form Tyr-AMP and then transferred to the acceptor end of tRNA(Tyr). The polypeptide is Tyrosine--tRNA ligase (Bartonella quintana (strain Toulouse) (Rochalimaea quintana)).